Reading from the N-terminus, the 1265-residue chain is Shugoshin 2 (1265 aa).

A coiled-coil region spans residues 69 to 116; it reads KENSRRITTEKMLLQKEVEKLNFENTFLRLKLNNLNKKLIDIEALMNN. Disordered stretches follow at residues 161–202, 230–287, 305–339, and 381–447; these read LTSN…STQD, DVPP…NLSA, LNCNNEINGHTNETNTEMQRNKQDLPGLSSESARE, and GIKK…GAED. Over residues 190 to 202 the composition is skewed to polar residues; sequence SSGSTTQPLSTQD. Over residues 232 to 242 the composition is skewed to basic and acidic residues; it reads PPRESHSHSDQ. The segment covering 305–322 has biased composition (polar residues); the sequence is LNCNNEINGHTNETNTEM. Composition is skewed to basic and acidic residues over residues 389–410 and 425–446; these read KTNEHGMKTFRKVKDSSSEKKR and IGEKIENRTERSDVLDGKRGAE. Positions 452 to 476 form a coiled coil; sequence FNNEQLAQMNEQLAQVNELKKMTLQ. A disordered region spans residues 499 to 526; that stretch reads EQEETYSLSQSSGKFHQESKFDKGQNSL. Positions 503–512 are enriched in polar residues; that stretch reads TYSLSQSSGK. Residues 603-626 adopt a coiled-coil conformation; the sequence is EQNESNINKLRKKVNRKTEIISGM. Residues 1073–1083 show a composition bias toward basic residues; sequence NKMTSKSKKRK. The tract at residues 1073–1093 is disordered; that stretch reads NKMTSKSKKRKTSIDPSPESH. At serine 1144 the chain carries Phosphoserine. The segment at 1200–1265 is disordered; that stretch reads KVNRRTQKSG…EPSLRDKMRR (66 aa). Polar residues predominate over residues 1217 to 1230; that stretch reads DLSNTSFVSNNTAE. Residues 1231–1243 show a composition bias toward basic and acidic residues; sequence SENKSEDLSSERT.

The protein belongs to the shugoshin family. As to quaternary structure, part of an astrin (SPAG5) -kinastrin (SKAP) complex containing KNSTRN, SPAG5, PLK1, DYNLL1 and SGO2. Interacts with CDCA8. Directly interacts with PPP2CA.

It is found in the nucleus. It localises to the chromosome. The protein resides in the centromere. Its subcellular location is the kinetochore. Its function is as follows. Cooperates with PPP2CA to protect centromeric cohesin from separase-mediated cleavage in oocytes specifically during meiosis I. Has a crucial role in protecting REC8 at centromeres from cleavage by separase. During meiosis, protects centromeric cohesion complexes until metaphase II/anaphase II transition, preventing premature release of meiosis-specific REC8 cohesin complexes from anaphase I centromeres. Is thus essential for an accurate gametogenesis. May act by targeting PPP2CA to centromeres, thus leading to cohesin dephosphorylation. Essential for recruiting KIF2C to the inner centromere and for correcting defective kinetochore attachments. Involved in centromeric enrichment of AUKRB in prometaphase. This is Shugoshin 2 from Homo sapiens (Human).